The primary structure comprises 248 residues: Probable transcriptional regulatory protein BBta_6910 (248 aa).

Belongs to the TACO1 family.

It localises to the cytoplasm. The protein is Probable transcriptional regulatory protein BBta_6910 of Bradyrhizobium sp. (strain BTAi1 / ATCC BAA-1182).